Here is a 347-residue protein sequence, read N- to C-terminus: NADH-quinone oxidoreductase subunit H (347 aa).

Transmembrane regions (helical) follow at residues 21–41 (IAGI…IIYA), 87–107 (GLFL…WAVI), 120–140 (VGLL…VIAG), 160–180 (ISYE…AGTF), 194–214 (WIIN…MFLI), 259–279 (LLMC…PLDI), 282–302 (LYLV…FFIF), and 324–344 (VFLP…MATG).

It belongs to the complex I subunit 1 family. As to quaternary structure, NDH-1 is composed of 14 different subunits. Subunits NuoA, H, J, K, L, M, N constitute the membrane sector of the complex.

It localises to the cell inner membrane. It carries out the reaction a quinone + NADH + 5 H(+)(in) = a quinol + NAD(+) + 4 H(+)(out). NDH-1 shuttles electrons from NADH, via FMN and iron-sulfur (Fe-S) centers, to quinones in the respiratory chain. The immediate electron acceptor for the enzyme in this species is believed to be ubiquinone. Couples the redox reaction to proton translocation (for every two electrons transferred, four hydrogen ions are translocated across the cytoplasmic membrane), and thus conserves the redox energy in a proton gradient. This subunit may bind ubiquinone. This is NADH-quinone oxidoreductase subunit H from Novosphingobium aromaticivorans (strain ATCC 700278 / DSM 12444 / CCUG 56034 / CIP 105152 / NBRC 16084 / F199).